Consider the following 249-residue polypeptide: Cell division protein DivIB (249 aa).

The Cytoplasmic segment spans residues 1–19 (MKEENEYIVKRRKKRRRKR). Residues 20 to 40 (ITIFLFLLICILVTLCLKLPY) form a helical membrane-spanning segment. The POTRA domain maps to 41 to 109 (FNIKYINVEG…NTIDIIVKER (69 aa)). Topologically, residues 41–249 (FNIKYINVEG…KGNPVYSLQQ (209 aa)) are extracellular.

Belongs to the FtsQ/DivIB family. DivIB subfamily.

The protein localises to the cell membrane. In terms of biological role, cell division protein that may be involved in stabilizing or promoting the assembly of the division complex. In Clostridium acetobutylicum (strain ATCC 824 / DSM 792 / JCM 1419 / IAM 19013 / LMG 5710 / NBRC 13948 / NRRL B-527 / VKM B-1787 / 2291 / W), this protein is Cell division protein DivIB.